Reading from the N-terminus, the 503-residue chain is MSHQEQLHKPNRQQFSEKQFIAFAFNYVAGFGFISVVLTMFKLGPFSYLILGLAALGILGVMLSFSRLSIICGSKAYGGSYLIAKKALGVKTITARFFTFLSGWNVSLTGPFNGLIVPAVLVLSFADIKAVKDNNGALIGLLVGGFVLFGALNFISLFGLKMNKNAILFFAIVKWVVVLGGLILGIYLIGTNHGHGFVENNTLGEHIEDLSFLKVISTTVGMLVAFAGTEDLTAITPDVKSKNIRKCFLLMFGAVTLLYLIGFVIISGISGLNGYGLDGKEKNEKAINTFGSIYFQAGGKYLGIPLLVIFGLGFLLNSLASRLGMTITTARKYVALAQDGFLPSFINEQNKHHEYHKAVWASNIMTLAVMVLMIIVPFLPNDENPGKQLVMFDAISVLVEVAIELAVLISLIQYFITYIFFFMILAKKEGSASVSWWEIASYGVSFAIITVLLFVNLFPITAWKNTNTFKLSILAAFFALGIGFFIHSEIKHKGQLVKSVECN.

The next 12 membrane-spanning stretches (helical) occupy residues 20–40 (FIAF…VLTM), 43–63 (LGPF…GVML), 106–126 (VSLT…LSFA), 138–158 (LIGL…ISLF), 166–186 (AILF…ILGI), 215–235 (VIST…LTAI), 249–269 (LLMF…ISGI), 301–321 (YLGI…SLAS), 359–379 (VWAS…VPFL), 405–425 (LAVL…FMIL), 443–463 (GVSF…ITAW), and 468–488 (TFKL…FIHS).

To M.genitalium MG225.

Its subcellular location is the cell membrane. This is an uncharacterized protein from Mycoplasma pneumoniae (strain ATCC 29342 / M129 / Subtype 1) (Mycoplasmoides pneumoniae).